We begin with the raw amino-acid sequence, 110 residues long: Insulin (110 aa).

The signal sequence occupies residues 1–23 (MALWLQAFTLLVLLVLSSPGAQS). Disulfide bonds link Cys30/Cys96, Cys42/Cys109, and Cys95/Cys100. The propeptide at 56-87 (DVDPLLGFLSPKSAQENEADEYPYKDQGDLKV) is c peptide.

This sequence belongs to the insulin family. Heterodimer of a B chain and an A chain linked by two disulfide bonds.

Its subcellular location is the secreted. Insulin decreases blood glucose concentration. It increases cell permeability to monosaccharides, amino acids and fatty acids. It accelerates glycolysis, the pentose phosphate cycle, and glycogen synthesis in liver. This Pantodon buchholzi (Freshwater butterflyfish) protein is Insulin (ins).